The chain runs to 204 residues: N-(5'-phosphoribosyl)anthranilate isomerase (204 aa).

This sequence belongs to the TrpF family.

It catalyses the reaction N-(5-phospho-beta-D-ribosyl)anthranilate = 1-(2-carboxyphenylamino)-1-deoxy-D-ribulose 5-phosphate. It functions in the pathway amino-acid biosynthesis; L-tryptophan biosynthesis; L-tryptophan from chorismate: step 3/5. This is N-(5'-phosphoribosyl)anthranilate isomerase from Bacillus mycoides (strain KBAB4) (Bacillus weihenstephanensis).